A 224-amino-acid polypeptide reads, in one-letter code: Phosphoribosyltransferase domain-containing protein 1 (224 aa).

Mg(2+) is bound by residues Glu140 and Asp141. Residues 140 to 148 (EDIINTGRT), Lys172, 193 to 194 (FV), and Asp200 contribute to the GMP site. A Mg(2+)-binding site is contributed by Asp200.

It belongs to the purine/pyrimidine phosphoribosyltransferase family.

The chain is Phosphoribosyltransferase domain-containing protein 1 (prtfdc1) from Xenopus laevis (African clawed frog).